The primary structure comprises 548 residues: Chaperonin GroEL (548 aa).

Residues 29 to 32, lysine 50, 86 to 90, glycine 414, 478 to 480, and aspartate 494 each bind ATP; these read TMGP, DGTTT, and NAA.

This sequence belongs to the chaperonin (HSP60) family. As to quaternary structure, forms a cylinder of 14 subunits composed of two heptameric rings stacked back-to-back. Interacts with the co-chaperonin GroES.

It is found in the cytoplasm. The catalysed reaction is ATP + H2O + a folded polypeptide = ADP + phosphate + an unfolded polypeptide.. In terms of biological role, together with its co-chaperonin GroES, plays an essential role in assisting protein folding. The GroEL-GroES system forms a nano-cage that allows encapsulation of the non-native substrate proteins and provides a physical environment optimized to promote and accelerate protein folding. Its function is as follows. May play a protective role against the defense mechanisms generated by the infected macrophages. This is Chaperonin GroEL from Legionella pneumophila.